Reading from the N-terminus, the 156-residue chain is Methylated-DNA--protein-cysteine methyltransferase (156 aa).

Cysteine 120 acts as the Nucleophile; methyl group acceptor in catalysis.

The protein belongs to the MGMT family.

The protein localises to the cytoplasm. The enzyme catalyses a 6-O-methyl-2'-deoxyguanosine in DNA + L-cysteinyl-[protein] = S-methyl-L-cysteinyl-[protein] + a 2'-deoxyguanosine in DNA. It carries out the reaction a 4-O-methyl-thymidine in DNA + L-cysteinyl-[protein] = a thymidine in DNA + S-methyl-L-cysteinyl-[protein]. In terms of biological role, involved in the cellular defense against the biological effects of O6-methylguanine (O6-MeG) and O4-methylthymine (O4-MeT) in DNA. Repairs the methylated nucleobase in DNA by stoichiometrically transferring the methyl group to a cysteine residue in the enzyme. This is a suicide reaction: the enzyme is irreversibly inactivated. This is Methylated-DNA--protein-cysteine methyltransferase from Metallosphaera sedula (strain ATCC 51363 / DSM 5348 / JCM 9185 / NBRC 15509 / TH2).